The following is a 49-amino-acid chain: Large ribosomal subunit protein bL33A (49 aa).

A disordered region spans residues 20–49 (KKNKRNNPDRVEFKKYCPRDKKSTLHRETK). Basic and acidic residues predominate over residues 25–49 (NNPDRVEFKKYCPRDKKSTLHRETK).

This sequence belongs to the bacterial ribosomal protein bL33 family. Part of the 50S ribosomal subunit. Interacts with VmlR.

In Bacillus subtilis (strain 168), this protein is Large ribosomal subunit protein bL33A (rpmGA).